The sequence spans 121 residues: MSITKDQIIEAVAAMSVMDVVELISAMEEKFGVSAAAAVAVAAGPVEAAEEKTEFDVILKAAGANKVAVIKAVRGATGLGLKEAKDLVESAPAALKEGVSKDDAEALKKALEEAGAEVEVK.

It belongs to the bacterial ribosomal protein bL12 family. Homodimer. Part of the ribosomal stalk of the 50S ribosomal subunit. Forms a multimeric L10(L12)X complex, where L10 forms an elongated spine to which 2 to 4 L12 dimers bind in a sequential fashion. Binds GTP-bound translation factors.

Its function is as follows. Forms part of the ribosomal stalk which helps the ribosome interact with GTP-bound translation factors. Is thus essential for accurate translation. The sequence is that of Large ribosomal subunit protein bL12 from Escherichia coli O45:K1 (strain S88 / ExPEC).